Consider the following 406-residue polypeptide: Protein ALP1-like (406 aa).

Residues 8–15 (KKKKRAEK) carry the Nuclear localization signal motif. The 167-residue stretch at 187–353 (IDITHIVMNL…IIFVCCLLHN (167 aa)) folds into the DDE Tnp4 domain. 3 residues coordinate a divalent metal cation: D188, D240, and D279.

This sequence belongs to the HARBI1 family. It depends on a divalent metal cation as a cofactor.

It is found in the nucleus. Its function is as follows. Transposase-derived protein that may have nuclease activity. The sequence is that of Protein ALP1-like from Arabidopsis thaliana (Mouse-ear cress).